Here is a 376-residue protein sequence, read N- to C-terminus: Eugenol O-methyltransferase (376 aa).

4 residues coordinate S-adenosyl-L-methionine: glycine 219, aspartate 242, methionine 263, and lysine 276. Histidine 280 acts as the Proton acceptor in catalysis.

This sequence belongs to the class I-like SAM-binding methyltransferase superfamily. Cation-independent O-methyltransferase family. COMT subfamily. As to quaternary structure, homodimer. Expressed predominantly in root hairs.

It carries out the reaction (E)-isoeugenol + S-adenosyl-L-methionine = (E)-isomethyleugenol + S-adenosyl-L-homocysteine + H(+). In terms of biological role, O-methyltransferase. Substrate preference is eugenol &gt;&gt; orcinol monomethyl ether &gt; resorcinol monomethyl ether. This chain is Eugenol O-methyltransferase (EOMT), found in Sorghum bicolor (Sorghum).